The primary structure comprises 117 residues: UPF0251 protein DehaBAV1_0135 (117 aa).

The protein belongs to the UPF0251 family.

The sequence is that of UPF0251 protein DehaBAV1_0135 from Dehalococcoides mccartyi (strain ATCC BAA-2100 / JCM 16839 / KCTC 5957 / BAV1).